Consider the following 427-residue polypeptide: Phosphomethylpyrimidine synthase (427 aa).

Substrate is bound by residues asparagine 66, methionine 95, tyrosine 124, histidine 163, 185-187, 226-229, and glutamate 265; these read SRG and DGLR. Histidine 269 is a Zn(2+) binding site. Tyrosine 292 contributes to the substrate binding site. Histidine 333 is a Zn(2+) binding site. Cysteine 409, cysteine 412, and cysteine 416 together coordinate [4Fe-4S] cluster.

Belongs to the ThiC family. In terms of assembly, homodimer. Requires [4Fe-4S] cluster as cofactor.

The catalysed reaction is 5-amino-1-(5-phospho-beta-D-ribosyl)imidazole + S-adenosyl-L-methionine = 4-amino-2-methyl-5-(phosphooxymethyl)pyrimidine + CO + 5'-deoxyadenosine + formate + L-methionine + 3 H(+). Its pathway is cofactor biosynthesis; thiamine diphosphate biosynthesis. Catalyzes the synthesis of the hydroxymethylpyrimidine phosphate (HMP-P) moiety of thiamine from aminoimidazole ribotide (AIR) in a radical S-adenosyl-L-methionine (SAM)-dependent reaction. The polypeptide is Phosphomethylpyrimidine synthase (Syntrophus aciditrophicus (strain SB)).